Reading from the N-terminus, the 803-residue chain is H(+)/Cl(-) exchange transporter 7 (803 aa).

The segment at 1 to 46 is disordered; sequence MANVSKKVSWSGRDRDDEEGAPLLRRTGQPDEETPLLNGAGPGARQ. At 1–124 the chain is on the cytoplasmic side; it reads MANVSKKVSW…TAFRTVEIKR (124 aa). Serine 9 bears the Phosphoserine mark. 2 helical membrane-spanning segments follow: residues 125-157 and 172-195; these read WVICALIGILTGLVACFIDIVVENLAGLKYRVI and FSLLLWATLNSAFVLVGSVIVAFI. Residues 201 to 205 carry the Selectivity filter part_1 motif; the sequence is GSGIP. Residue serine 202 participates in chloride binding. Residues 204–211 constitute an intramembrane region (helical); it reads IPQIKCFL. 2 helical membrane passes run 221–239 and 245–262; these read RLKTLVIKVSGVILSVVGG and EGPMIHSGSVIAAGISQG. The Selectivity filter part_2 signature appears at 243–247; the sequence is GKEGP. 2 consecutive intramembrane regions (helical) follow at residues 286-298 and 302-310; these read FVSAGAAAGVSAA and PVGGVLFSL. 5 helical membrane passes run 320–339, 373–403, 408–430, 485–505, and 510–533; these read FLTWRIFFASMISTFTLNFV, IPVFIAMGVVGGILGAVFNALNYWLTMFRIR, PCLQVIEAMLVAAVTATVAFVLI, PMTLGLFTLVYFFLACWTYGL, and GVFIPSLLIGAAWGRLFGISMSYL. Positions 510–514 match the Selectivity filter part_3 motif; the sequence is GVFIP. Position 512 (phenylalanine 512) interacts with chloride. The segment at residues 543-557 is an intramembrane region (helical); it reads GKYALMGAAAQLGGI. Positions 558–560 form an intramembrane region, note=Loop between two helices; that stretch reads VRM. An intramembrane region (helical) is located at residues 561–572; that stretch reads TLSLTVIMMEAT. Residues 573–576 constitute an intramembrane region (note=Loop between two helices); sequence SNVT. Residues 577–595 traverse the membrane as a helical segment; the sequence is YGFPIMLVLMTAKIVGDVF. Residues 596 to 803 lie on the Cytoplasmic side of the membrane; that stretch reads IEGLYDMHIQ…GLEELSLAQT (208 aa). Tyrosine 600 contacts chloride. CBS domains follow at residues 629–693 and 739–797; these read MSTP…VFVE and MNPS…GLEE. Residues 656–658 and 781–784 each bind ATP; these read HNG and TRKD. At serine 799 the chain carries Phosphoserine.

The protein belongs to the chloride channel (TC 2.A.49) family. ClC-7/CLCN7 subfamily. In terms of assembly, chloride channel 7 are heteromers of alpha (CLCN7) and beta (OSTM1) subunits. As to expression, brain, testis, muscle and kidney.

It localises to the lysosome membrane. The enzyme catalyses 2 chloride(in) + H(+)(out) = 2 chloride(out) + H(+)(in). Slowly voltage-gated channel mediating the exchange of chloride ions against protons. Functions as antiporter and contributes to the acidification of the lysosome lumen and may be involved in maintaining lysosomal pH. The CLC channel family contains both chloride channels and proton-coupled anion transporters that exchange chloride or another anion for protons. The presence of conserved gating glutamate residues is typical for family members that function as antiporters. The protein is H(+)/Cl(-) exchange transporter 7 (Clcn7) of Rattus norvegicus (Rat).